The chain runs to 796 residues: Ent-copalyl diphosphate synthase 4 (796 aa).

A chloroplast-targeting transit peptide spans 1 to 23 (MSSSSIVTSLLRPTTAADGVLPR). Lys240 is a substrate binding site. Asp371 and Asp373 together coordinate Mg(2+). The short motif at 371-374 (DVDD) is the DXDD motif element. Position 457 (Lys457) interacts with substrate.

It belongs to the terpene synthase family. Tpsc subfamily. It depends on Mg(2+) as a cofactor. In terms of tissue distribution, highly expressed in leaves, and, at low levels, in stems, but barely in roots and flowers.

The protein localises to the plastid. It is found in the chloroplast. The enzyme catalyses (2E,6E,10E)-geranylgeranyl diphosphate = ent-copalyl diphosphate. The protein operates within secondary metabolite biosynthesis; terpenoid biosynthesis. Involved in the biosynthesis of ent-kaurene diterpenoids natural products such as oridonin, miltiradiene, eriocalyxin B and nezukol, known to exhibit antitumor, anti-inflammatory and antibacterial activities. Catalyzes the conversion of (2E,6E,10E)-geranylgeranyl diphosphate (GGPP) to ent-copalyl diphosphate (ent-CPP). The sequence is that of Ent-copalyl diphosphate synthase 4 from Isodon rubescens (Rabdosia rubescens).